The following is a 434-amino-acid chain: uncharacterized protein (434 aa).

The residue at position 216 (K216) is an N6-(pyridoxal phosphate)lysine.

This is an uncharacterized protein from Schizosaccharomyces pombe (strain 972 / ATCC 24843) (Fission yeast).